A 1102-amino-acid chain; its full sequence is Phosphatidylinositol 4,5-bisphosphate 3-kinase catalytic subunit gamma isoform (1102 aa).

Positions 34–141 (SMELIPIEFV…PGQIHLVQRH (108 aa)) constitute a PI3K-ABD domain. The PI3K-RBD domain maps to 217–309 (NNCIFIVIHR…GEEIHVVLDT (93 aa)). One can recognise a C2 PI3K-type domain in the interval 357–521 (CDRKFRVKIR…NSMSISILLD (165 aa)). The region spanning 541–723 (DRVRAEMPNQ…AVILEAYLRG (183 aa)) is the PIK helical domain. Residues 797–1080 (AIEKCKVMAS…QIEVCRDKGW (284 aa)) enclose the PI3K/PI4K catalytic domain. Positions 803-809 (VMASKKK) are G-loop. ATP contacts are provided by residues 829-838 (GIIFKHGDDL) and 864-872 (LLPYGCIST). Positions 943-951 (GIGDRHNDN) are catalytic loop. Residue 961–969 (FHIDFGHIL) coordinates ATP. Positions 962-988 (HIDFGHILGNYKSFLGINKERVPFVLT) are activation loop. Thr1024 is modified (phosphothreonine; by PKA). Residue Ser1101 is modified to Phosphoserine; by autocatalysis.

Belongs to the PI3/PI4-kinase family. Heterodimer of a catalytic subunit PIK3CG and a PIK3R5 or PIK3R6 regulatory subunit. Interacts with GRK2 through the PIK helical domain. Interaction with GRK2 is required for targeting to agonist-occupied receptor. Interacts with PDE3B; regulates PDE3B activity and thereby cAMP levels in cells. Interacts with TPM2. Interacts with EPHA8; regulates integrin-mediated cell adhesion to substrate. Interacts with HRAS; the interaction is required for membrane recruitment and beta-gamma G protein dimer-dependent activation of the PI3K gamma complex PIK3CG:PIK3R6. Autophosphorylation at Ser-1101 has no effect on the phosphatidylinositol-4,5-bisphosphate 3-kinase activity. In terms of tissue distribution, pancreas, skeletal muscle, liver and heart.

The protein localises to the cytoplasm. It is found in the cell membrane. It catalyses the reaction a 1,2-diacyl-sn-glycero-3-phospho-(1D-myo-inositol) + ATP = a 1,2-diacyl-sn-glycero-3-phospho-(1D-myo-inositol-3-phosphate) + ADP + H(+). It carries out the reaction a 1,2-diacyl-sn-glycero-3-phospho-(1D-myo-inositol-4,5-bisphosphate) + ATP = a 1,2-diacyl-sn-glycero-3-phospho-(1D-myo-inositol-3,4,5-trisphosphate) + ADP + H(+). The catalysed reaction is a 1,2-diacyl-sn-glycero-3-phospho-(1D-myo-inositol 4-phosphate) + ATP = a 1,2-diacyl-sn-glycero-3-phospho-(1D-myo-inositol-3,4-bisphosphate) + ADP + H(+). The enzyme catalyses L-seryl-[protein] + ATP = O-phospho-L-seryl-[protein] + ADP + H(+). It functions in the pathway phospholipid metabolism; phosphatidylinositol phosphate biosynthesis. With respect to regulation, activated by both the alpha and the beta-gamma G proteins following stimulation of G protein-coupled receptors (GPCRs). Activation by GPCRs is assisted by the regulatory subunits (PIK3R5 or PIK3R6) leading to the translocation from the cytosol to the plasma membrane and to kinase activation. Inhibited by AS-604850 and AS-605240. Phosphoinositide-3-kinase (PI3K) that phosphorylates PtdIns(4,5)P2 (Phosphatidylinositol 4,5-bisphosphate) to generate phosphatidylinositol 3,4,5-trisphosphate (PIP3). PIP3 plays a key role by recruiting PH domain-containing proteins to the membrane, including AKT1 and PDPK1, activating signaling cascades involved in cell growth, survival, proliferation, motility and morphology. Links G-protein coupled receptor activation to PIP3 production. Involved in immune, inflammatory and allergic responses. Modulates leukocyte chemotaxis to inflammatory sites and in response to chemoattractant agents. May control leukocyte polarization and migration by regulating the spatial accumulation of PIP3 and by regulating the organization of F-actin formation and integrin-based adhesion at the leading edge. Controls motility of dendritic cells. Together with PIK3CD is involved in natural killer (NK) cell development and migration towards the sites of inflammation. Participates in T-lymphocyte migration. Regulates T-lymphocyte proliferation, activation, and cytokine production. Together with PIK3CD participates in T-lymphocyte development. Required for B-lymphocyte development and signaling. Together with PIK3CD participates in neutrophil respiratory burst. Together with PIK3CD is involved in neutrophil chemotaxis and extravasation. Together with PIK3CB promotes platelet aggregation and thrombosis. Regulates alpha-IIb/beta-3 integrins (ITGA2B/ ITGB3) adhesive function in platelets downstream of P2Y12 through a lipid kinase activity-independent mechanism. May have also a lipid kinase activity-dependent function in platelet aggregation. Involved in endothelial progenitor cell migration. Negative regulator of cardiac contractility. Modulates cardiac contractility by anchoring protein kinase A (PKA) and PDE3B activation, reducing cAMP levels. Regulates cardiac contractility also by promoting beta-adrenergic receptor internalization by binding to GRK2 and by non-muscle tropomyosin phosphorylation. Also has serine/threonine protein kinase activity: both lipid and protein kinase activities are required for beta-adrenergic receptor endocytosis. May also have a scaffolding role in modulating cardiac contractility. Contributes to cardiac hypertrophy under pathological stress. Through simultaneous binding of PDE3B to RAPGEF3 and PIK3R6 is assembled in a signaling complex in which the PI3K gamma complex is activated by RAPGEF3 and which is involved in angiogenesis. In neutrophils, participates in a phospholipase C-activating N-formyl peptide-activated GPCR (G protein-coupled receptor) signaling pathway downstream of RASGRP4-mediated Ras-activation, to promote neutrophil functional responses. This is Phosphatidylinositol 4,5-bisphosphate 3-kinase catalytic subunit gamma isoform (PIK3CG) from Homo sapiens (Human).